The sequence spans 201 residues: Recombination protein RecR (201 aa).

Residues 60–75 (CSCCGNVDTIDPCTVC) form a C4-type zinc finger. Residues 83 to 178 (SVIIVVEDVS…KITRLAHGVP (96 aa)) enclose the Toprim domain.

This sequence belongs to the RecR family.

Functionally, may play a role in DNA repair. It seems to be involved in an RecBC-independent recombinational process of DNA repair. It may act with RecF and RecO. This Agrobacterium fabrum (strain C58 / ATCC 33970) (Agrobacterium tumefaciens (strain C58)) protein is Recombination protein RecR.